The chain runs to 196 residues: uncharacterized protein (196 aa).

Residues Ile-11–Val-31 form a helical membrane-spanning segment.

It localises to the membrane. This is an uncharacterized protein from Mycoplasma genitalium (strain ATCC 33530 / DSM 19775 / NCTC 10195 / G37) (Mycoplasmoides genitalium).